Reading from the N-terminus, the 312-residue chain is Probable rRNA-processing protein EBP2 (312 aa).

The tract at residues 1–32 (MLHHEDESSPESDSDFDASELTDKELQEAFSQ) is disordered. Acidic residues predominate over residues 8-20 (SSPESDSDFDASE). Residues 140–176 (EMAKTDQHMQKIRHKLQLKQASMEKSEKAKQLRALRK) adopt a coiled-coil conformation. The tract at residues 211–312 (LDFLEGDQTP…VRQKMKSKRR (102 aa)) is disordered. Basic residues predominate over residues 282–312 (KGPHRPGKKGGKNANKRPGKNVRQKMKSKRR).

It belongs to the EBP2 family.

Its subcellular location is the nucleus. It localises to the nucleolus. In terms of biological role, required for the processing of the 27S pre-rRNA. This is Probable rRNA-processing protein EBP2 (ebna1bp2) from Xenopus laevis (African clawed frog).